A 119-amino-acid polypeptide reads, in one-letter code: Chymotrypsin inhibitor WCI (119 aa).

Cystine bridges form between Cys-6-Cys-55, Cys-20-Cys-44, Cys-29-Cys-87, Cys-45-Cys-105, and Cys-57-Cys-116.

Its subcellular location is the secreted. Inhibits bovine, insect and wheat chymotrypsins. Inhibits bovine chymotrypsin with Ki of 0.6 nM. Does not inhibit human or wheat alpha-amylases, bovine pancreatic trypsin, or trypsin-like activity isolated from wheat. The polypeptide is Chymotrypsin inhibitor WCI (Triticum aestivum (Wheat)).